The chain runs to 217 residues: Probable transaldolase (217 aa).

K83 serves as the catalytic Schiff-base intermediate with substrate.

The protein belongs to the transaldolase family. Type 3B subfamily.

The protein resides in the cytoplasm. The enzyme catalyses D-sedoheptulose 7-phosphate + D-glyceraldehyde 3-phosphate = D-erythrose 4-phosphate + beta-D-fructose 6-phosphate. It participates in carbohydrate degradation; pentose phosphate pathway; D-glyceraldehyde 3-phosphate and beta-D-fructose 6-phosphate from D-ribose 5-phosphate and D-xylulose 5-phosphate (non-oxidative stage): step 2/3. Its function is as follows. Transaldolase is important for the balance of metabolites in the pentose-phosphate pathway. This is Probable transaldolase from Brucella anthropi (strain ATCC 49188 / DSM 6882 / CCUG 24695 / JCM 21032 / LMG 3331 / NBRC 15819 / NCTC 12168 / Alc 37) (Ochrobactrum anthropi).